Consider the following 123-residue polypeptide: Diacylglycerol kinase (123 aa).

Residues 15–32 traverse the membrane as a helical segment; the sequence is ILNATGYSLAGFLAAFRG. Glu-33 contributes to the a divalent metal cation binding site. The next 3 membrane-spanning stretches (helical) occupy residues 35–55, 61–81, and 102–122; these read AFRQ…LLDV, ALMI…SAIE, and GSAA…TILL. Glu-74 (proton acceptor) is an active-site residue. Glu-81 contributes to the a divalent metal cation binding site.

It belongs to the bacterial diacylglycerol kinase family. Mg(2+) is required as a cofactor.

It is found in the cell inner membrane. It carries out the reaction a 1,2-diacyl-sn-glycerol + ATP = a 1,2-diacyl-sn-glycero-3-phosphate + ADP + H(+). Functionally, catalyzes the ATP-dependent phosphorylation of sn-l,2-diacylglycerol (DAG) to phosphatidic acid. Involved in the recycling of diacylglycerol produced as a by-product during membrane-derived oligosaccharide (MDO) biosynthesis. This chain is Diacylglycerol kinase (dgkA), found in Pseudomonas aeruginosa (strain ATCC 15692 / DSM 22644 / CIP 104116 / JCM 14847 / LMG 12228 / 1C / PRS 101 / PAO1).